The following is a 343-amino-acid chain: ATP-dependent 6-phosphofructokinase (343 aa).

Residues glycine 10, 73-74 (RV), and 103-106 (GEGT) contribute to the ATP site. Mg(2+) is bound at residue glutamate 104. Residues 126-128 (TID), arginine 163, 170-172 (MGR), glutamate 223, arginine 267, and 273-276 (HIQR) each bind substrate. Aspartate 128 functions as the Proton acceptor in the catalytic mechanism.

Belongs to the phosphofructokinase type A (PFKA) family. Mixed-substrate PFK group III subfamily. In terms of assembly, homodimer or homotetramer. Mg(2+) is required as a cofactor.

The protein localises to the cytoplasm. The catalysed reaction is beta-D-fructose 6-phosphate + ATP = beta-D-fructose 1,6-bisphosphate + ADP + H(+). It catalyses the reaction D-tagatofuranose 6-phosphate + ATP = D-tagatofuranose 1,6-bisphosphate + ADP + H(+). It functions in the pathway carbohydrate degradation; glycolysis; D-glyceraldehyde 3-phosphate and glycerone phosphate from D-glucose: step 3/4. Functionally, catalyzes the phosphorylation of D-fructose 6-phosphate to fructose 1,6-bisphosphate by ATP, the first committing step of glycolysis. Can also catalyze the phosphorylation of tagatose-6-phosphate. The sequence is that of ATP-dependent 6-phosphofructokinase from Mycobacterium tuberculosis (strain CDC 1551 / Oshkosh).